We begin with the raw amino-acid sequence, 89 residues long: Small ribosomal subunit protein uS15 (89 aa).

Belongs to the universal ribosomal protein uS15 family. As to quaternary structure, part of the 30S ribosomal subunit. Forms a bridge to the 50S subunit in the 70S ribosome, contacting the 23S rRNA.

Its function is as follows. One of the primary rRNA binding proteins, it binds directly to 16S rRNA where it helps nucleate assembly of the platform of the 30S subunit by binding and bridging several RNA helices of the 16S rRNA. In terms of biological role, forms an intersubunit bridge (bridge B4) with the 23S rRNA of the 50S subunit in the ribosome. The protein is Small ribosomal subunit protein uS15 of Corynebacterium glutamicum (strain R).